The following is an 87-amino-acid chain: Small ribosomal subunit protein bS16 (87 aa).

The protein belongs to the bacterial ribosomal protein bS16 family.

The chain is Small ribosomal subunit protein bS16 from Ehrlichia chaffeensis (strain ATCC CRL-10679 / Arkansas).